The following is a 678-amino-acid chain: Translation factor GUF1 homolog, chloroplastic (678 aa).

Residues 1 to 43 (MASILLSLNTHTLLPLHTRTRTTKTTLKILRFSHKLPPSSPFY) constitute a chloroplast transit peptide. One can recognise a tr-type G domain in the interval 81-262 (KNIRNFCIIA…AIVERVPPPR (182 aa)). GTP contacts are provided by residues 90-97 (AHIDHGKS), 155-159 (DTPGH), and 209-212 (NKID).

This sequence belongs to the TRAFAC class translation factor GTPase superfamily. Classic translation factor GTPase family. LepA subfamily.

Its subcellular location is the plastid. It is found in the chloroplast. It carries out the reaction GTP + H2O = GDP + phosphate + H(+). Its function is as follows. Promotes chloroplast protein synthesis. May act as a fidelity factor of the translation reaction, by catalyzing a one-codon backward translocation of tRNAs on improperly translocated ribosomes. The protein is Translation factor GUF1 homolog, chloroplastic of Populus trichocarpa (Western balsam poplar).